A 497-amino-acid chain; its full sequence is Probable cytosol aminopeptidase (497 aa).

Mn(2+) is bound by residues K263 and D268. K275 is an active-site residue. Mn(2+)-binding residues include D286, D345, and E347. Residue R349 is part of the active site.

It belongs to the peptidase M17 family. It depends on Mn(2+) as a cofactor.

The protein resides in the cytoplasm. The enzyme catalyses Release of an N-terminal amino acid, Xaa-|-Yaa-, in which Xaa is preferably Leu, but may be other amino acids including Pro although not Arg or Lys, and Yaa may be Pro. Amino acid amides and methyl esters are also readily hydrolyzed, but rates on arylamides are exceedingly low.. It carries out the reaction Release of an N-terminal amino acid, preferentially leucine, but not glutamic or aspartic acids.. Functionally, presumably involved in the processing and regular turnover of intracellular proteins. Catalyzes the removal of unsubstituted N-terminal amino acids from various peptides. This Methylorubrum extorquens (strain CM4 / NCIMB 13688) (Methylobacterium extorquens) protein is Probable cytosol aminopeptidase.